Consider the following 453-residue polypeptide: DDB1- and CUL4-associated factor 12 (453 aa).

The segment covering 1–12 has biased composition (basic residues); it reads MARKAVSRKRKA. The segment at 1–34 is disordered; it reads MARKAVSRKRKASASPGAGSDAQGPQFGWDHSLH. The required for nuclear location and interaction with MOV10 stretch occupies residues 1–38; sequence MARKAVSRKRKASASPGAGSDAQGPQFGWDHSLHKRKR. Serine 15 bears the Phosphoserine mark. WD repeat units lie at residues 138–178, 182–220, 250–289, and 338–375; these read QQGC…PVCV, GHKDWIFSIAWINDTMAVSGSRDGSMGLWEVTDDVLTKS, PDNCKVRALAFNNKNKELGAVSLDGYFHLWKAENTLSKLL, and ERGSGIRSVSFYEHIITVGTGQGSLLFYDIRAQRFLEE.

It belongs to the WD repeat DCAF12 family. In terms of assembly, component of the DCX(DCAF12) E3 ubiquitin ligase complex, at least composed of CUL4 (CUL4A or CUL4B), DDB1, DCAF12 and RBX1.

The protein resides in the cytoplasm. It localises to the cytoskeleton. The protein localises to the microtubule organizing center. Its subcellular location is the centrosome. It is found in the nucleus. It participates in protein modification; protein ubiquitination. Functionally, substrate-recognition component of a DCX (DDB1-CUL4-X-box) E3 ubiquitin-protein ligase complex of the DesCEND (destruction via C-end degrons) pathway, which recognizes a C-degron located at the extreme C terminus of target proteins, leading to their ubiquitination and degradation. The C-degron recognized by the DesCEND pathway is usually a motif of less than ten residues and can be present in full-length proteins, truncated proteins or proteolytically cleaved forms. The DCX(DCAF12) complex specifically recognizes proteins with a diglutamate (Glu-Glu) at the C-terminus, such as MAGEA3, MAGEA6 and CCT5, leading to their ubiquitination and degradation. Ubiquitination of MAGEA3, MAGEA6 by DCX(DCAF12) complex is required for starvation-induced autophagy. Also directly recognizes the C-terminal glutamate-leucine (Glu-Leu) degron as an alternative degron in proteins such as MOV10, leading to their ubiquitination and degradation. Controls the protein level of MOV10 during spermatogenesis and in T cells, especially after their activation. This Mus musculus (Mouse) protein is DDB1- and CUL4-associated factor 12.